The chain runs to 331 residues: Adenine deaminase (331 aa).

3 residues coordinate Zn(2+): H17, H19, and H197. Catalysis depends on E200, which acts as the Proton donor. Residue D278 participates in Zn(2+) binding. A substrate-binding site is contributed by D279.

It belongs to the metallo-dependent hydrolases superfamily. Adenosine and AMP deaminases family. Adenine deaminase type 2 subfamily. Zn(2+) is required as a cofactor.

The catalysed reaction is adenine + H2O + H(+) = hypoxanthine + NH4(+). Functionally, catalyzes the hydrolytic deamination of adenine to hypoxanthine. Plays an important role in the purine salvage pathway and in nitrogen catabolism. The sequence is that of Adenine deaminase from Wolinella succinogenes (strain ATCC 29543 / DSM 1740 / CCUG 13145 / JCM 31913 / LMG 7466 / NCTC 11488 / FDC 602W) (Vibrio succinogenes).